A 643-amino-acid chain; its full sequence is Extracellular metalloproteinase 4 (643 aa).

Residues 1 to 18 (MHGLLLAGLLALPLNVLA) form the signal peptide. A propeptide spanning residues 19–254 (HPTESHSSGI…VHSVVDYVSA (236 aa)) is cleaved from the precursor. Positions 47-57 (TKSDAVPKQDD) are enriched in basic and acidic residues. The tract at residues 47-71 (TKSDAVPKQDDESFTTSSTGDDNVS) is disordered. The span at 60-71 (FTTSSTGDDNVS) shows a compositional bias: polar residues. Residues N271 and N420 are each glycosylated (N-linked (GlcNAc...) asparagine). Zn(2+) is bound at residue H437. E438 is a catalytic residue. H441 contacts Zn(2+). N-linked (GlcNAc...) asparagine glycans are attached at residues N510 and N553.

It belongs to the peptidase M36 family. It depends on Zn(2+) as a cofactor.

It is found in the secreted. Its function is as follows. Secreted metalloproteinase probably acting as a virulence factor. The polypeptide is Extracellular metalloproteinase 4 (MEP4) (Arthroderma benhamiae (Trichophyton mentagrophytes)).